The primary structure comprises 912 residues: Multiple C2 and transmembrane domain-containing protein (912 aa).

The segment covering 1–33 has biased composition (low complexity); the sequence is MSRIQYVDQVDQVELDQQQQPGSSSTVSGSTPP. Disordered stretches follow at residues 1–80 and 145–165; these read MSRI…KRAK and SSEG…IGGS. A compositionally biased stretch (polar residues) spans 38–49; that stretch reads PHGSPSLQQSQR. 3 C2 domains span residues 218-337, 371-493, and 522-637; these read QANE…HLQL, RNSK…HLML, and ERYK…TLKD. Ca(2+) contacts are provided by Asp-252, Asp-258, Asp-305, Asp-307, and Asp-313. Asp-553, Asp-559, Asp-605, and Asp-607 together coordinate Ca(2+). Helical transmembrane passes span 729–749 and 826–846; these read IVAC…LIIL and LTWL…FVPL. The segment at 887-912 is disordered; sequence NQYRELPPSAPTDQTRNNPKKKLKGS.

Ca(2+) serves as cofactor. In terms of tissue distribution, motor neurons (at protein level).

The protein resides in the endoplasmic reticulum membrane. Functionally, calcium sensor which is essential for the stabilization of normal baseline neurotransmitter release and for the induction and long-term maintenance of presynaptic homeostatic plasticity. The chain is Multiple C2 and transmembrane domain-containing protein from Drosophila melanogaster (Fruit fly).